We begin with the raw amino-acid sequence, 62 residues long: Alpha-conotoxin-like Ca1.1 (62 aa).

An N-terminal signal peptide occupies residues 1 to 21; sequence MGMRMMFTVFLLVVLATTVVS. Positions 22-46 are excised as a propeptide; the sequence is FTSDRASDGRNAAANAFDLIALIAR. At Q47 the chain carries Pyrrolidone carboxylic acid. Intrachain disulfides connect C49/C55 and C50/C61.

This sequence belongs to the conotoxin A superfamily. In terms of tissue distribution, expressed by the venom duct.

It localises to the secreted. Its function is as follows. Alpha-conotoxins act on postsynaptic membranes, they bind to the nicotinic acetylcholine receptors (nAChR) and thus inhibit them. The chain is Alpha-conotoxin-like Ca1.1 from Conus caracteristicus (Characteristic cone).